The primary structure comprises 897 residues: DNA polymerase I (897 aa).

The 317-residue stretch at Met1 to Asn317 folds into the 5'-3' exonuclease domain. One can recognise a 3'-5' exonuclease domain in the interval Ala318–Gly494. The segment at Asp498–Lys896 is polymerase.

This sequence belongs to the DNA polymerase type-A family. In terms of assembly, single-chain monomer with multiple functions.

The enzyme catalyses DNA(n) + a 2'-deoxyribonucleoside 5'-triphosphate = DNA(n+1) + diphosphate. In terms of biological role, in addition to polymerase activity, this DNA polymerase exhibits 3'-5' and 5'-3' exonuclease activity. This chain is DNA polymerase I (polA), found in Helicobacter pylori (strain J99 / ATCC 700824) (Campylobacter pylori J99).